The sequence spans 303 residues: Probable serine acetyltransferase 1 (303 aa).

Disordered stretches follow at residues 1–36 (MTAG…ESDA) and 271–290 (NPAR…ESMD).

The protein belongs to the transferase hexapeptide repeat family. As to quaternary structure, homomultimer.

The catalysed reaction is L-serine + acetyl-CoA = O-acetyl-L-serine + CoA. Its pathway is amino-acid biosynthesis; L-cysteine biosynthesis; L-cysteine from L-serine: step 1/2. The protein is Probable serine acetyltransferase 1 (SAT1) of Oryza sativa subsp. japonica (Rice).